A 78-amino-acid chain; its full sequence is Pigment-dispersing hormone 2 peptides (78 aa).

The first 21 residues, 1–21 (MRSGVFVAVLVVVVFALLTQG), serve as a signal peptide directing secretion. At A75 the chain carries Alanine amide.

This sequence belongs to the arthropod PDH family. Eyestalk sinus gland.

It localises to the secreted. The pigment-dispersing hormone causes the migration of the distal retinal pigment into the proximal end of the pigment chromatophore cells and thus decreases the amount of light entering the retinulas. May also function as a neurotransmitter and/or neuromodulator. In Callinectes sapidus (Blue crab), this protein is Pigment-dispersing hormone 2 peptides (PDH2).